An 865-amino-acid chain; its full sequence is Eukaryotic translation initiation factor 3 subunit C (865 aa).

Disordered regions lie at residues 1 to 92 (MSRF…AKDK) and 206 to 243 (EDEEEPAPKPKKAAKVSFDEATAEDEEDDEGFARVGKG). Acidic residues-rich tracts occupy residues 16–54 (SSDEEELYSEEEEEELEDEGDDSDNDGSGDDDSDSDSDA) and 69–80 (DDDSSDEEDSDA). Residues 82 to 92 (VTTKVKSAKDK) show a composition bias toward basic and acidic residues. Residues 226–235 (ATAEDEEDDE) show a composition bias toward acidic residues. One can recognise a PCI domain in the interval 606 to 780 (FHMHINLELL…QTVIFRKGVE (175 aa)). The disordered stretch occupies residues 801–865 (SNERTLEQRT…GGALGAAVRA (65 aa)). A compositionally biased stretch (polar residues) spans 808 to 817 (QRTQGTSNAF). Residues 822–841 (GRGGRGGGRGRGGGRGGPRF) show a composition bias toward gly residues.

It belongs to the eIF-3 subunit C family. As to quaternary structure, component of the eukaryotic translation initiation factor 3 (eIF-3) complex.

Its subcellular location is the cytoplasm. Its function is as follows. Component of the eukaryotic translation initiation factor 3 (eIF-3) complex, which is involved in protein synthesis of a specialized repertoire of mRNAs and, together with other initiation factors, stimulates binding of mRNA and methionyl-tRNAi to the 40S ribosome. The eIF-3 complex specifically targets and initiates translation of a subset of mRNAs involved in cell proliferation. This is Eukaryotic translation initiation factor 3 subunit C from Pyricularia oryzae (strain 70-15 / ATCC MYA-4617 / FGSC 8958) (Rice blast fungus).